Consider the following 318-residue polypeptide: Acetyl-coenzyme A carboxylase carboxyl transferase subunit alpha (318 aa).

The 255-residue stretch at Ala38–Glu292 folds into the CoA carboxyltransferase C-terminal domain.

This sequence belongs to the AccA family. As to quaternary structure, acetyl-CoA carboxylase is a heterohexamer composed of biotin carboxyl carrier protein (AccB), biotin carboxylase (AccC) and two subunits each of ACCase subunit alpha (AccA) and ACCase subunit beta (AccD).

The protein resides in the cytoplasm. It carries out the reaction N(6)-carboxybiotinyl-L-lysyl-[protein] + acetyl-CoA = N(6)-biotinyl-L-lysyl-[protein] + malonyl-CoA. It functions in the pathway lipid metabolism; malonyl-CoA biosynthesis; malonyl-CoA from acetyl-CoA: step 1/1. Functionally, component of the acetyl coenzyme A carboxylase (ACC) complex. First, biotin carboxylase catalyzes the carboxylation of biotin on its carrier protein (BCCP) and then the CO(2) group is transferred by the carboxyltransferase to acetyl-CoA to form malonyl-CoA. In Paracoccus denitrificans (strain Pd 1222), this protein is Acetyl-coenzyme A carboxylase carboxyl transferase subunit alpha.